The following is a 233-amino-acid chain: Probable septum site-determining protein MinC (233 aa).

The disordered stretch occupies residues 104-124 (QKMATPEPAPAPAPVVDPNAP).

The protein belongs to the MinC family. In terms of assembly, interacts with MinD and FtsZ.

Cell division inhibitor that blocks the formation of polar Z ring septums. Rapidly oscillates between the poles of the cell to destabilize FtsZ filaments that have formed before they mature into polar Z rings. Prevents FtsZ polymerization. In Serratia proteamaculans (strain 568), this protein is Probable septum site-determining protein MinC.